We begin with the raw amino-acid sequence, 713 residues long: Denticleless protein homolog (713 aa).

WD repeat units lie at residues 47 to 89 (GAAV…VQRL), 96 to 135 (AHTN…LIGE), and 138 to 178 (GHQC…KDGF). A DDB1-binding motif motif is present at residues 168–171 (WDTR). Residues 197 to 204 (PSKVKKRK) carry the Nuclear localization signal motif. 4 WD repeats span residues 215 to 254 (DSQQ…SAYR), 270 to 309 (TRKL…TEPV), 314 to 355 (GHQN…VPPV), and 359 to 399 (GHCQ…EDSA). Residues 244–247 (WDLR) carry the DDB1-binding motif motif. Disordered regions lie at residues 474 to 544 (TPQR…EKRA), 604 to 623 (GFDQ…NGTV), and 635 to 700 (SDLR…TPGS). Polar residues-rich tracts occupy residues 504 to 516 (TPKS…TKTP) and 612 to 623 (GPSTSFLINGTV). Positions 635–644 (SDLRDKENSS) are enriched in basic and acidic residues. Over residues 686–699 (NAPNSPVSVPTTPG) the composition is skewed to polar residues.

The protein belongs to the WD repeat cdt2 family. Component of the DCX(DTL) E3 ubiquitin ligase complex, at least composed of cul4 (cul4a or cul4b), ddb1, dtl/cdt2 and rbx1.

Its subcellular location is the nucleus. It is found in the cytoplasm. The protein localises to the cytoskeleton. The protein resides in the microtubule organizing center. It localises to the centrosome. Its subcellular location is the chromosome. Its pathway is protein modification; protein ubiquitination. Substrate-specific adapter of a DCX (DDB1-CUL4-X-box) E3 ubiquitin-protein ligase complex required for cell cycle control, DNA damage response and translesion DNA synthesis. The DCX(DTL) complex, also named CRL4(CDT2) complex, mediates the polyubiquitination and subsequent degradation of CDT1, CDKN1A/p21(CIP1), KMT5A and SDE2. CDT1 degradation in response to DNA damage is necessary to ensure proper cell cycle regulation of DNA replication. CDKN1A/p21(CIP1) degradation during S phase or following UV irradiation is essential to control replication licensing. KMT5A degradation is also important for a proper regulation of mechanisms such as TGF-beta signaling, cell cycle progression, DNA repair and cell migration. Most substrates require their interaction with PCNA for their polyubiquitination: substrates interact with PCNA via their PIP-box, and those containing the 'K+4' motif in the PIP box, recruit the DCX(DTL) complex, leading to their degradation. In undamaged proliferating cells, the DCX(DTL) complex also promotes the 'Lys-164' monoubiquitination of PCNA, thereby being involved in PCNA-dependent translesion DNA synthesis. May play a role in the regulation of the circadian clock. The polypeptide is Denticleless protein homolog (dtl) (Xenopus tropicalis (Western clawed frog)).